We begin with the raw amino-acid sequence, 688 residues long: Translation initiation factor IF-2 (688 aa).

The span at 50–62 (LLSGKEKSEKTKE) shows a compositional bias: basic and acidic residues. Residues 50-95 (LLSGKEKSEKTKEEDDEIETTAKNPIKESINNKKSNKRDDKKEKVN) are disordered. Low complexity predominate over residues 72 to 82 (KNPIKESINNK). Residues 86-95 (KRDDKKEKVN) show a composition bias toward basic and acidic residues. The 168-residue stretch at 187–354 (KRSPIITVMG…MILLSSEILE (168 aa)) folds into the tr-type G domain. Residues 196–203 (GHVDHGKT) form a G1 region. Residue 196–203 (GHVDHGKT) participates in GTP binding. Positions 221-225 (GITQH) are G2. The interval 242-245 (DTPG) is G3. GTP contacts are provided by residues 242 to 246 (DTPGH) and 296 to 299 (NKID). The G4 stretch occupies residues 296–299 (NKID). The G5 stretch occupies residues 332-334 (SAH).

It belongs to the TRAFAC class translation factor GTPase superfamily. Classic translation factor GTPase family. IF-2 subfamily.

The protein localises to the cytoplasm. Functionally, one of the essential components for the initiation of protein synthesis. Protects formylmethionyl-tRNA from spontaneous hydrolysis and promotes its binding to the 30S ribosomal subunits. Also involved in the hydrolysis of GTP during the formation of the 70S ribosomal complex. This chain is Translation initiation factor IF-2, found in Clostridium botulinum (strain 657 / Type Ba4).